The sequence spans 54 residues: ATP synthase protein 8 (54 aa).

The helical transmembrane segment at 9–29 (WIINFFIVWTADFTLLIVLSI) threads the bilayer.

It belongs to the ATPase protein 8 family. In terms of assembly, F-type ATPases have 2 components, CF(1) - the catalytic core - and CF(0) - the membrane proton channel.

The protein resides in the mitochondrion membrane. In terms of biological role, mitochondrial membrane ATP synthase (F(1)F(0) ATP synthase or Complex V) produces ATP from ADP in the presence of a proton gradient across the membrane which is generated by electron transport complexes of the respiratory chain. F-type ATPases consist of two structural domains, F(1) - containing the extramembraneous catalytic core and F(0) - containing the membrane proton channel, linked together by a central stalk and a peripheral stalk. During catalysis, ATP synthesis in the catalytic domain of F(1) is coupled via a rotary mechanism of the central stalk subunits to proton translocation. Part of the complex F(0) domain. Minor subunit located with subunit a in the membrane. In Arbacia lixula (Black urchin), this protein is ATP synthase protein 8 (MT-ATP8).